The primary structure comprises 45 residues: Large ribosomal subunit protein bL34 (45 aa).

Residues 1-45 (MTKRTFGGTSRKRKRVSGFRVRMRSHTGRRVIKSRRKRGRERIAV) form a disordered region. Positions 10-45 (SRKRKRVSGFRVRMRSHTGRRVIKSRRKRGRERIAV) are enriched in basic residues.

The protein belongs to the bacterial ribosomal protein bL34 family.

This is Large ribosomal subunit protein bL34 from Prochlorococcus marinus subsp. pastoris (strain CCMP1986 / NIES-2087 / MED4).